We begin with the raw amino-acid sequence, 145 residues long: 6-pyruvoyl tetrahydrobiopterin synthase (145 aa).

S19 bears the Phosphoserine; by PKG mark. H24 provides a ligand contact to Zn(2+). S28 is subject to Phosphoserine. The active-site Proton acceptor is the C43. Zn(2+) is bound by residues H49 and H51. H90 functions as the Charge relay system in the catalytic mechanism. At Y128 the chain carries Phosphotyrosine. Residue E134 is the Charge relay system of the active site.

Belongs to the PTPS family. As to quaternary structure, homohexamer formed of two homotrimers in a head to head fashion. It depends on Zn(2+) as a cofactor. Post-translationally, phosphorylation of Ser-19 is required for maximal enzyme activity.

It carries out the reaction 7,8-dihydroneopterin 3'-triphosphate = 6-pyruvoyl-5,6,7,8-tetrahydropterin + triphosphate + H(+). It functions in the pathway cofactor biosynthesis; tetrahydrobiopterin biosynthesis; tetrahydrobiopterin from 7,8-dihydroneopterin triphosphate: step 1/3. Functionally, involved in the biosynthesis of tetrahydrobiopterin, an essential cofactor of aromatic amino acid hydroxylases. Catalyzes the transformation of 7,8-dihydroneopterin triphosphate into 6-pyruvoyl tetrahydropterin. This is 6-pyruvoyl tetrahydrobiopterin synthase (PTS) from Homo sapiens (Human).